Reading from the N-terminus, the 351-residue chain is Phospho-N-acetylmuramoyl-pentapeptide-transferase (351 aa).

Transmembrane regions (helical) follow at residues 17–37 (MAYATIFAFLLSLIVGPHIIL), 62–82 (GIPTMGGILIFFCVFISLVFW), 85–105 (ILNVYFLIIVFVMFGFAFLGF), 130–150 (IIFSFISVSILYYLGGEHVSI), 163–183 (LGVFYIPFGMFILIAASNSFN), 190–210 (GLAIGLSIVITGALIIIAYIT), 230–250 (LVIFLGALLGGSFGFLWFNAY), 254–274 (IMMGDTGSLALGAILGMTALI), 281–301 (FSILAGVFIIETMSVIIQVIV), and 328–348 (QVVIRFWIIGLIFAIIALSTI).

The protein belongs to the glycosyltransferase 4 family. MraY subfamily. Requires Mg(2+) as cofactor.

It localises to the cell inner membrane. The enzyme catalyses UDP-N-acetyl-alpha-D-muramoyl-L-alanyl-gamma-D-glutamyl-meso-2,6-diaminopimeloyl-D-alanyl-D-alanine + di-trans,octa-cis-undecaprenyl phosphate = di-trans,octa-cis-undecaprenyl diphospho-N-acetyl-alpha-D-muramoyl-L-alanyl-D-glutamyl-meso-2,6-diaminopimeloyl-D-alanyl-D-alanine + UMP. It functions in the pathway cell wall biogenesis; peptidoglycan biosynthesis. Catalyzes the initial step of the lipid cycle reactions in the biosynthesis of the cell wall peptidoglycan: transfers peptidoglycan precursor phospho-MurNAc-pentapeptide from UDP-MurNAc-pentapeptide onto the lipid carrier undecaprenyl phosphate, yielding undecaprenyl-pyrophosphoryl-MurNAc-pentapeptide, known as lipid I. The sequence is that of Phospho-N-acetylmuramoyl-pentapeptide-transferase from Borreliella afzelii (strain PKo) (Borrelia afzelii).